Here is a 360-residue protein sequence, read N- to C-terminus: Peptide chain release factor 1 (360 aa).

Q235 carries the N5-methylglutamine modification. A disordered region spans residues 284–313 (AKRQQAEASTRRNLLGSGDRSDRNRTYNFP).

Belongs to the prokaryotic/mitochondrial release factor family. Post-translationally, methylated by PrmC. Methylation increases the termination efficiency of RF1.

The protein resides in the cytoplasm. In terms of biological role, peptide chain release factor 1 directs the termination of translation in response to the peptide chain termination codons UAG and UAA. The protein is Peptide chain release factor 1 of Salmonella arizonae (strain ATCC BAA-731 / CDC346-86 / RSK2980).